Reading from the N-terminus, the 320-residue chain is Quinolinate synthase (320 aa).

Residues His34 and Ser51 each coordinate iminosuccinate. Cys96 is a [4Fe-4S] cluster binding site. Residues 122-124 (YIN) and Ser139 contribute to the iminosuccinate site. Cys182 is a [4Fe-4S] cluster binding site. Iminosuccinate contacts are provided by residues 208-210 (HPE) and Thr225. Cys276 is a [4Fe-4S] cluster binding site.

The protein belongs to the quinolinate synthase family. Type 2 subfamily. Requires [4Fe-4S] cluster as cofactor.

The protein localises to the cytoplasm. The catalysed reaction is iminosuccinate + dihydroxyacetone phosphate = quinolinate + phosphate + 2 H2O + H(+). It functions in the pathway cofactor biosynthesis; NAD(+) biosynthesis; quinolinate from iminoaspartate: step 1/1. Catalyzes the condensation of iminoaspartate with dihydroxyacetone phosphate to form quinolinate. The sequence is that of Quinolinate synthase from Synechococcus sp. (strain ATCC 27144 / PCC 6301 / SAUG 1402/1) (Anacystis nidulans).